An 82-amino-acid polypeptide reads, in one-letter code: Consomatin Ro2 (82 aa).

An N-terminal signal peptide occupies residues 1-22; it reads MQTAYWLMVMMMVWITAPLYEG. Residues 23–57 constitute a propeptide that is removed on maturation; the sequence is GKPNDVIRGLVPDDLTPQFILRSLISRRRSDKDVR. Residues C62 and C68 are joined by a disulfide bond. W64 carries the post-translational modification D-tryptophan. 4-hydroxyproline occurs at positions 69 and 70. Positions 72–82 are excised as a propeptide; it reads LWRRHDRKGKD.

It belongs to the conotoxin C superfamily. Consomatin family. As to expression, expressed by the venom duct.

Its subcellular location is the secreted. Functionally, moderately activates human somatostatin receptors (SSTR) with a preferential activation of SSTR1 and SSTR4. In vivo, does not cause behavioral changes in mice within a few minutes of intracranial injection, but causes a progressive loss of movement thereafter. Four to five hours after injection, mice recover, even with the highest dose tested. Shows antinociception and antihyperalgesia activities in two mouse models of acute pain, most probably by acting outside the central nervous system. This Conus rolani (Cone snail) protein is Consomatin Ro2.